Reading from the N-terminus, the 224-residue chain is 4-aminobenzoate synthase (224 aa).

Fe(2+) is bound by residues E77, H84, E138, H169, D173, and H176.

It belongs to the CADD family. As to quaternary structure, homodimer. Fe(2+) serves as cofactor. Mn(2+) is required as a cofactor.

Functionally, involved in de novo para-aminobenzoate (PABA) biosynthesis. Acts as a self-sacrificing or 'suicide' enzyme that utilizes its own active site tyrosine residue(s) as the substrate for PABA synthesis. The side chain of the tyrosine residue is released from the protein backbone via cleavage of the C(alpha)-C(beta) bond, leaving a glycine in place of the original tyrosine residue. Reaction requires O(2) and a reduced dimetal cofactor. The polypeptide is 4-aminobenzoate synthase (Chlamydia pneumoniae (Chlamydophila pneumoniae)).